The chain runs to 505 residues: Calcium/calmodulin-dependent protein kinase kinase 1 (505 aa).

The interval 28–66 is disordered; it reads LEEADEGPEPARNGVDPPPRARAASVIPGSASRPTPVRP. A phosphoserine mark is found at serine 67 and serine 74. Residue arginine 78 is modified to Asymmetric dimethylarginine. The tract at residues 84-105 is disordered; the sequence is LGAQVGPYSTGPASHISPRSWR. At serine 100 the chain carries Phosphoserine. Phosphothreonine is present on threonine 108. The 282-residue stretch at 128-409 folds into the Protein kinase domain; sequence YKLQSEIGKG…VSDIKLHPWV (282 aa). Residues 134–142 and lysine 157 each bind ATP; that span reads IGKGAYGVV. Residues 167-189 form an RP domain region; it reads QYGFPRRPPPRGSQATQGGPAKQ. Aspartate 275 serves as the catalytic Proton acceptor. Residues 435-440 are autoinhibitory domain; the sequence is KNSVRL. Positions 438 to 463 are calmodulin-binding; that stretch reads VRLIPSWTTVILVKSMLRKRSFGNPF. Phosphoserine occurs at positions 458, 475, and 492. The interval 460–505 is disordered; the sequence is GNPFEPQARREERSMSAPGSLLMKEGCGEGCKSPELPGVQEDEAAS.

This sequence belongs to the protein kinase superfamily. Ser/Thr protein kinase family. As to quaternary structure, interacts with CAMK4 and calmodulin. Post-translationally, appears to be autophosphorylated in a Ca(2+)/calmodulin-dependent manner. Phosphorylated at multiple sites by PRCAKA/PKA. Phosphorylation of Ser-458 is blocked upon binding to Ca(2+)/calmodulin. In vitro, phosphorylated by CAMK1 and CAMK4. Widely expressed. Differentially expressed in various brain regions.

The protein resides in the cytoplasm. Its subcellular location is the nucleus. The enzyme catalyses L-seryl-[protein] + ATP = O-phospho-L-seryl-[protein] + ADP + H(+). It carries out the reaction L-threonyl-[protein] + ATP = O-phospho-L-threonyl-[protein] + ADP + H(+). Activated by Ca(2+)/calmodulin. Binding of calmodulin may relieve intrasteric autoinhibition. Partially inhibited upon phosphorylation by PRCAKA/PKA. May be regulated through phosphorylation by CAMK1 and CAMK4. Calcium/calmodulin-dependent protein kinase that belongs to a proposed calcium-triggered signaling cascade involved in a number of cellular processes. Phosphorylates CAMK1, CAMK1D, CAMK1G and CAMK4. Involved in regulating cell apoptosis. Promotes cell survival by phosphorylating AKT1/PKB that inhibits pro-apoptotic BAD/Bcl2-antagonist of cell death. The chain is Calcium/calmodulin-dependent protein kinase kinase 1 (Camkk1) from Mus musculus (Mouse).